The following is a 97-amino-acid chain: Large ribosomal subunit protein bL27 (97 aa).

The disordered stretch occupies residues 1 to 21 (MAHKKGVGSSRNGRDSNPKYR).

Belongs to the bacterial ribosomal protein bL27 family.

This chain is Large ribosomal subunit protein bL27, found in Gemmatimonas aurantiaca (strain DSM 14586 / JCM 11422 / NBRC 100505 / T-27).